The primary structure comprises 309 residues: Isoaspartyl peptidase/L-asparaginase (309 aa).

Thr-166 serves as the catalytic Nucleophile. Residues 194-197 and 217-220 each bind substrate; these read RVGD and TGHG.

Belongs to the Ntn-hydrolase family. Heterodimer of an alpha and beta chain produced by autocleavage. Post-translationally, cleaved into an alpha and beta chain by autocatalysis; this activates the enzyme. The N-terminal residue of the beta subunit is responsible for the nucleophile hydrolase activity.

The protein resides in the cytoplasm. The enzyme catalyses L-asparagine + H2O = L-aspartate + NH4(+). The catalysed reaction is Cleavage of a beta-linked Asp residue from the N-terminus of a polypeptide.. Functionally, has both L-asparaginase and beta-aspartyl peptidase activity. Does not have aspartylglucosaminidase activity and is inactive toward GlcNAc-L-Asn. Likewise, has no activity toward glutamine. This is Isoaspartyl peptidase/L-asparaginase (asrgl1) from Xenopus laevis (African clawed frog).